A 337-amino-acid polypeptide reads, in one-letter code: Anthranilate phosphoribosyltransferase (337 aa).

Residues G81, G84–D85, S89, N91–T94, K109–S117, and A121 contribute to the 5-phospho-alpha-D-ribose 1-diphosphate site. Residue G81 coordinates anthranilate. S93 provides a ligand contact to Mg(2+). N112 provides a ligand contact to anthranilate. R167 contributes to the anthranilate binding site. Mg(2+)-binding residues include D226 and E227.

It belongs to the anthranilate phosphoribosyltransferase family. As to quaternary structure, homodimer. It depends on Mg(2+) as a cofactor.

It catalyses the reaction N-(5-phospho-beta-D-ribosyl)anthranilate + diphosphate = 5-phospho-alpha-D-ribose 1-diphosphate + anthranilate. It participates in amino-acid biosynthesis; L-tryptophan biosynthesis; L-tryptophan from chorismate: step 2/5. In terms of biological role, catalyzes the transfer of the phosphoribosyl group of 5-phosphorylribose-1-pyrophosphate (PRPP) to anthranilate to yield N-(5'-phosphoribosyl)-anthranilate (PRA). The protein is Anthranilate phosphoribosyltransferase of Bradyrhizobium diazoefficiens (strain JCM 10833 / BCRC 13528 / IAM 13628 / NBRC 14792 / USDA 110).